The sequence spans 436 residues: GTPase Der (436 aa).

2 EngA-type G domains span residues 4–167 (PVIA…PTDL) and 175–351 (IKFS…ENQN). GTP-binding positions include 10–17 (GRPNVGKS), 57–61 (DTGGI), 119–122 (NKAD), 181–188 (GRPNVGKS), 229–233 (DTAGI), and 294–297 (NKWD). The region spanning 352–436 (RRIQSALLND…PIHLIPRQRK (85 aa)) is the KH-like domain.

Belongs to the TRAFAC class TrmE-Era-EngA-EngB-Septin-like GTPase superfamily. EngA (Der) GTPase family. Associates with the 50S ribosomal subunit.

Functionally, GTPase that plays an essential role in the late steps of ribosome biogenesis. In Latilactobacillus sakei subsp. sakei (strain 23K) (Lactobacillus sakei subsp. sakei), this protein is GTPase Der.